We begin with the raw amino-acid sequence, 125 residues long: Glycine cleavage system H protein (125 aa).

The Lipoyl-binding domain maps to serine 21–lysine 103. Lysine 62 carries the N6-lipoyllysine modification.

Belongs to the GcvH family. In terms of assembly, the glycine cleavage system is composed of four proteins: P, T, L and H. Requires (R)-lipoate as cofactor.

The glycine cleavage system catalyzes the degradation of glycine. The H protein shuttles the methylamine group of glycine from the P protein to the T protein. In Psychromonas ingrahamii (strain DSM 17664 / CCUG 51855 / 37), this protein is Glycine cleavage system H protein.